A 168-amino-acid polypeptide reads, in one-letter code: Putative ankyrin repeat protein RBE_1411 (168 aa).

3 ANK repeats span residues 59-88, 98-127, and 131-160; these read TIFS…LQHK, YGDT…DLTI, and KGET…ILGN.

This chain is Putative ankyrin repeat protein RBE_1411, found in Rickettsia bellii (strain RML369-C).